The sequence spans 151 residues: MVGFKNRYMLMEVFLDPDKDLLGEGTPIILTQFNLSKAIKDSILVNFGECGLGSSLGSFQVKYVNPITKLCIVRSSREEHRQVWLAITLVKSIGNCPVILNLLDISGCIRACRDTALKCDKEKFEQCSKSLSEEEIRQMNTSLEKIKLLEN.

The protein belongs to the eukaryotic/archaeal RNase P protein component 2 family. In terms of assembly, component of nuclear RNase P and RNase MRP ribonucleoproteins. Interacts with GAF1/RPP30.

It localises to the nucleus. The protein localises to the nucleolus. Functionally, essential protein required during embryogenesis. Component of ribonuclease P, a protein complex that generates mature tRNA molecules by cleaving their 5'-ends. Also a component of RNase MRP. The chain is Probable ribonuclease P/MRP protein subunit POP5 (EMB1687) from Arabidopsis thaliana (Mouse-ear cress).